Reading from the N-terminus, the 101-residue chain is Long chronological lifespan protein 1 (101 aa).

The N-terminal stretch at 1–17 is a signal peptide; that stretch reads MKNAALCEALPLLATCS. Serine 81 is lipidated: GPI-anchor amidated serine. Residues 82-101 constitute a propeptide, removed in mature form; the sequence is FAKPSFSFFFFLLTSLLSPF.

It localises to the cell membrane. This Saccharomyces cerevisiae (strain ATCC 204508 / S288c) (Baker's yeast) protein is Long chronological lifespan protein 1 (LCL1).